A 354-amino-acid polypeptide reads, in one-letter code: S-adenosylmethionine:tRNA ribosyltransferase-isomerase (354 aa).

Belongs to the QueA family. Monomer.

The protein localises to the cytoplasm. It carries out the reaction 7-aminomethyl-7-carbaguanosine(34) in tRNA + S-adenosyl-L-methionine = epoxyqueuosine(34) in tRNA + adenine + L-methionine + 2 H(+). Its pathway is tRNA modification; tRNA-queuosine biosynthesis. Its function is as follows. Transfers and isomerizes the ribose moiety from AdoMet to the 7-aminomethyl group of 7-deazaguanine (preQ1-tRNA) to give epoxyqueuosine (oQ-tRNA). This Salmonella schwarzengrund (strain CVM19633) protein is S-adenosylmethionine:tRNA ribosyltransferase-isomerase.